A 119-amino-acid polypeptide reads, in one-letter code: Holo-[acyl-carrier-protein] synthase (119 aa).

Mg(2+) contacts are provided by aspartate 8 and glutamate 58.

This sequence belongs to the P-Pant transferase superfamily. AcpS family. It depends on Mg(2+) as a cofactor.

The protein localises to the cytoplasm. The catalysed reaction is apo-[ACP] + CoA = holo-[ACP] + adenosine 3',5'-bisphosphate + H(+). Its function is as follows. Transfers the 4'-phosphopantetheine moiety from coenzyme A to a Ser of acyl-carrier-protein. In Bacillus cereus (strain G9842), this protein is Holo-[acyl-carrier-protein] synthase.